We begin with the raw amino-acid sequence, 526 residues long: Lysine--tRNA ligase (526 aa).

Positions 431 and 438 each coordinate Mg(2+).

It belongs to the class-II aminoacyl-tRNA synthetase family. Homodimer. The cofactor is Mg(2+).

Its subcellular location is the cytoplasm. The enzyme catalyses tRNA(Lys) + L-lysine + ATP = L-lysyl-tRNA(Lys) + AMP + diphosphate. The sequence is that of Lysine--tRNA ligase (lysS) from Chlamydia trachomatis serovar D (strain ATCC VR-885 / DSM 19411 / UW-3/Cx).